A 577-amino-acid chain; its full sequence is Arginine--tRNA ligase (577 aa).

A 'HIGH' region motif is present at residues 132–142; it reads ANPTGPLHVGH.

Belongs to the class-I aminoacyl-tRNA synthetase family. Monomer.

It localises to the cytoplasm. It carries out the reaction tRNA(Arg) + L-arginine + ATP = L-arginyl-tRNA(Arg) + AMP + diphosphate. The protein is Arginine--tRNA ligase of Herminiimonas arsenicoxydans.